A 193-amino-acid chain; its full sequence is Cysteine and glycine-rich protein 1 (193 aa).

The region spanning 10–61 (CGVCQKTVYFAEEVQCEGNSFHKSCFLCMVCKKNLDSTTVAVHGEEIYCKSC) is the LIM zinc-binding 1 domain. A Nuclear localization signal motif is present at residues 64 to 69 (KKYGPK). Ser81 carries the post-translational modification Phosphoserine. Lys84 carries the N6-acetyllysine modification. A Glycyl lysine isopeptide (Lys-Gly) (interchain with G-Cter in SUMO2) cross-link involves residue Lys91. Residues Lys112, Lys131, Lys137, and Lys161 each carry the N6-acetyllysine modification. Positions 119-170 (CPRCSQAVYAAEKVIGAGKSWHKSCFRCAKCGKGLESTTLADKDGEIYCKGC) constitute an LIM zinc-binding 2 domain. Ser192 carries the phosphoserine modification.

In terms of assembly, interacts with ASCC1; ASCC2 and TRIP4.

Its subcellular location is the nucleus. In terms of biological role, could play a role in neuronal development. The protein is Cysteine and glycine-rich protein 1 (Csrp1) of Mus musculus (Mouse).